A 56-amino-acid chain; its full sequence is Large ribosomal subunit protein bL32 (56 aa).

Residues 1-26 (MAVQQNKKSRSKRGMRRSHDALSTAQ) are disordered. The span at 7–16 (KKSRSKRGMR) shows a compositional bias: basic residues.

The protein belongs to the bacterial ribosomal protein bL32 family.

This chain is Large ribosomal subunit protein bL32, found in Shewanella amazonensis (strain ATCC BAA-1098 / SB2B).